The following is a 98-amino-acid chain: Protein S100-A13 (98 aa).

The region spanning 18–53 is the EF-hand domain; sequence TTFFTFARQEGRKDSLSVNEFKELVTQQLPHLLKDV. Ca(2+)-binding residues include serine 32, glutamate 37, aspartate 64, asparagine 66, aspartate 68, glutamate 70, and glutamate 75. Position 32 is a phosphoserine (serine 32).

It belongs to the S-100 family. In terms of assembly, homodimer. Part of a copper-dependent multiprotein complex containing S100A13, FGF1 and SYT1. Interacts with FGF1 and SYT1. Interacts with IL1A. As to expression, expressed in heart and skeletal muscle.

It is found in the cytoplasm. The protein localises to the secreted. Functionally, plays a role in the export of proteins that lack a signal peptide and are secreted by an alternative pathway. Binds two calcium ions per subunit. Binds one copper ion. Binding of one copper ion does not interfere with calcium binding. Required for the copper-dependent stress-induced export of IL1A and FGF1. The calcium-free protein binds to lipid vesicles containing phosphatidylserine, but not to vesicles containing phosphatidylcholine. The sequence is that of Protein S100-A13 (S100A13) from Homo sapiens (Human).